We begin with the raw amino-acid sequence, 353 residues long: 3'(2'),5'-bisphosphate nucleotidase 1 (353 aa).

Asp-46 serves as the catalytic Proton acceptor. Mg(2+) is bound by residues Glu-71, Asp-134, Ile-136, and Asp-137. Thr-139 (proton acceptor) is an active-site residue. Residues Thr-139, His-235, Ser-259, Lys-262, Arg-276, and Asp-288 each coordinate adenosine 3',5'-bisphosphate. 5 residues coordinate AMP: His-235, Ser-259, Lys-262, Arg-276, and Asp-288. Residue Asp-288 participates in Mg(2+) binding.

This sequence belongs to the inositol monophosphatase superfamily. The cofactor is Mg(2+). Expressed in roots, leaves, stems, flowers and siliques.

It catalyses the reaction 3'-phosphoadenylyl sulfate + H2O = adenosine 5'-phosphosulfate + phosphate. The catalysed reaction is adenosine 3',5'-bisphosphate + H2O = AMP + phosphate. It carries out the reaction adenosine 2',5'-bisphosphate + H2O = AMP + phosphate. The enzyme catalyses 1D-myo-inositol 1,4-bisphosphate + H2O = 1D-myo-inositol 4-phosphate + phosphate. It catalyses the reaction 1D-myo-inositol 1,3,4-trisphosphate + H2O = 1D-myo-inositol 3,4-bisphosphate + phosphate. The protein operates within signal transduction; phosphatidylinositol signaling pathway. Its activity is regulated as follows. Inhibited non-competitively by Li(+) (IC(50)=0.20 mM) and Na(+) (IC(50)=200 mM). Functionally, phosphatase that converts adenosine 3'-phosphate 5'-phosphosulfate (PAPS) to adenosine 5'-phosphosulfate (APS) and 3'(2')-phosphoadenosine 5'-phosphate (PAP) to AMP. May regulate the flux of sulfur in the sulfur-activation pathway by converting PAPS to APS. May play a role in the biosynthesis of sulfate conjugates and RNA processing. Is also able to hydrolyze inositol 1,4-bisphosphate and inositol 1,3,4-trisphosphate. Could be considered as a negative regulator of abscisic acid (ABA)- and stress-responsive genes, through modulating the inositol 1,4,5-trisphosphate (IP3) turnover. Is also involved in salt tolerance. Acts as a suppressor of virus- and transgene-induced silencing. The chain is 3'(2'),5'-bisphosphate nucleotidase 1 from Arabidopsis thaliana (Mouse-ear cress).